A 362-amino-acid chain; its full sequence is Transcription factor bHLH128 (362 aa).

The span at 1-16 (MYQSSSSTSSSSQRSS) shows a compositional bias: low complexity. Disordered regions lie at residues 1–23 (MYQS…GGGL), 78–106 (SDST…SNKD), 120–140 (SQQH…YSLA), and 162–184 (LNQP…HSRL). A compositionally biased stretch (polar residues) spans 78-96 (SDSTTCGVNNSSDGQKQLG). The segment covering 162 to 173 (LNQPTSDYSPQG) has biased composition (polar residues). The residue at position 189 (serine 189) is a Phosphoserine. One can recognise a bHLH domain in the interval 289–339 (CATHPRSIAERERRTRISGKLKKLQDLVPNMDKQTSYSDMLDLAVQHIKGL).

In terms of assembly, homodimer.

It is found in the nucleus. This is Transcription factor bHLH128 (BHLH128) from Arabidopsis thaliana (Mouse-ear cress).